A 217-amino-acid polypeptide reads, in one-letter code: Dense granule protein 1 (217 aa).

The N-terminal stretch at 1–19 (MARQATFIVALCVCGLAIA) is a signal peptide. A compositionally biased stretch (polar residues) spans 171–183 (VASEDSALGNSEE). The tract at residues 171 to 217 (VASEDSALGNSEEQYVEGTVNGSSDPEQERAGGPLIPEGDEQEVDTE) is disordered. Asparagine 191 is a glycosylation site (N-linked (GlcNAc...) asparagine). The span at 208–217 (EGDEQEVDTE) shows a compositional bias: acidic residues.

Belongs to the Gra7 family.

The protein localises to the secreted. The chain is Dense granule protein 1 (DG1) from Neospora caninum (Coccidian parasite).